The following is a 53-amino-acid chain: Natriuretic peptide DNP-2 (53 aa).

Cysteine 7 and cysteine 23 are disulfide-bonded. A propeptide spanning residues 39-53 is cleaved from the precursor; that stretch reads IIRDLHPDSKQSQAA.

This sequence belongs to the natriuretic peptide family. As to expression, expressed by the venom gland.

The protein resides in the secreted. In terms of biological role, exhibits vasodilator, natriuretic and diuretic properties in animal models and human tissues. Acts by stimulating cGMP via the natriuretic peptide receptor 1 (NPR1). Is a poor agonist of the atrial natriuretic peptide receptor 2 (NPR2). Is not degraded by neutral endopeptidase (NEP/MME). Binds to atrial natriuretic peptide clearance receptor (NPR-C/NPR3), which may be responsible of the removal of DNP from the circulation. Increases calcium uptake and induces histamine release from rat peritoneal mast cells. Increases calcium-activated potassium (KCa) current in gastric antral circular smooth muscle cells by increasing cGMP production and activating inositol trisphosphate receptors (IP3Rs). In vivo, reduces both systolic and diastolic blood pressure with no effect on heart rate, when intravenously injected in conscious rabbits. This is Natriuretic peptide DNP-2 from Dendroaspis angusticeps (Eastern green mamba).